The sequence spans 227 residues: PKHD-type hydroxylase Mfla_2317 (227 aa).

The region spanning 78–178 is the Fe2OG dioxygenase domain; the sequence is KVFPPLFNRY…RVSSFFWMQS (101 aa). Residues His-96, Asp-98, and His-159 each contribute to the Fe cation site. 2-oxoglutarate is bound at residue Arg-169.

It depends on Fe(2+) as a cofactor. L-ascorbate serves as cofactor.

In Methylobacillus flagellatus (strain ATCC 51484 / DSM 6875 / VKM B-1610 / KT), this protein is PKHD-type hydroxylase Mfla_2317.